Reading from the N-terminus, the 107-residue chain is Large ribosomal subunit protein P1 (107 aa).

Residues 67 to 107 (GAAPAAAAPAAGGAPAAGAAPKKEEKKEPSEEEDMGFSLFD) are disordered. Over residues 69–86 (APAAAAPAAGGAPAAGAA) the composition is skewed to low complexity.

Belongs to the eukaryotic ribosomal protein P1/P2 family. In terms of assembly, P1 and P2 exist as dimers at the large ribosomal subunit.

Its function is as follows. Plays an important role in the elongation step of protein synthesis. The sequence is that of Large ribosomal subunit protein P1 from Chlamydomonas reinhardtii (Chlamydomonas smithii).